The primary structure comprises 146 residues: UPF0178 protein OB0454 (146 aa).

This sequence belongs to the UPF0178 family.

In Oceanobacillus iheyensis (strain DSM 14371 / CIP 107618 / JCM 11309 / KCTC 3954 / HTE831), this protein is UPF0178 protein OB0454.